The chain runs to 233 residues: Phosphatidylserine decarboxylase proenzyme (233 aa).

Catalysis depends on serine 201, which acts as the Schiff-base intermediate with substrate; via pyruvic acid. Serine 201 carries the post-translational modification Pyruvic acid (Ser); by autocatalysis.

It belongs to the phosphatidylserine decarboxylase family. PSD-A subfamily. Heterodimer of a large membrane-associated beta subunit and a small pyruvoyl-containing alpha subunit. Pyruvate is required as a cofactor. Post-translationally, is synthesized initially as an inactive proenzyme. Formation of the active enzyme involves a self-maturation process in which the active site pyruvoyl group is generated from an internal serine residue via an autocatalytic post-translational modification. Two non-identical subunits are generated from the proenzyme in this reaction, and the pyruvate is formed at the N-terminus of the alpha chain, which is derived from the carboxyl end of the proenzyme. The post-translation cleavage follows an unusual pathway, termed non-hydrolytic serinolysis, in which the side chain hydroxyl group of the serine supplies its oxygen atom to form the C-terminus of the beta chain, while the remainder of the serine residue undergoes an oxidative deamination to produce ammonia and the pyruvoyl prosthetic group on the alpha chain.

It localises to the cell membrane. The catalysed reaction is a 1,2-diacyl-sn-glycero-3-phospho-L-serine + H(+) = a 1,2-diacyl-sn-glycero-3-phosphoethanolamine + CO2. It functions in the pathway phospholipid metabolism; phosphatidylethanolamine biosynthesis; phosphatidylethanolamine from CDP-diacylglycerol: step 2/2. Its function is as follows. Catalyzes the formation of phosphatidylethanolamine (PtdEtn) from phosphatidylserine (PtdSer). The polypeptide is Phosphatidylserine decarboxylase proenzyme (Mycolicibacterium vanbaalenii (strain DSM 7251 / JCM 13017 / BCRC 16820 / KCTC 9966 / NRRL B-24157 / PYR-1) (Mycobacterium vanbaalenii)).